The sequence spans 240 residues: Purine nucleoside phosphorylase DeoD-type (240 aa).

Position 5 (H5) interacts with a purine D-ribonucleoside. Phosphate is bound by residues G21, R25, R44, and R88–S91. Residues E180–E182 and S204–D205 contribute to the a purine D-ribonucleoside site. D205 (proton donor) is an active-site residue.

This sequence belongs to the PNP/UDP phosphorylase family. As to quaternary structure, homohexamer; trimer of homodimers.

The catalysed reaction is a purine D-ribonucleoside + phosphate = a purine nucleobase + alpha-D-ribose 1-phosphate. It carries out the reaction a purine 2'-deoxy-D-ribonucleoside + phosphate = a purine nucleobase + 2-deoxy-alpha-D-ribose 1-phosphate. Functionally, catalyzes the reversible phosphorolytic breakdown of the N-glycosidic bond in the beta-(deoxy)ribonucleoside molecules, with the formation of the corresponding free purine bases and pentose-1-phosphate. This is Purine nucleoside phosphorylase DeoD-type from Actinobacillus pleuropneumoniae serotype 5b (strain L20).